Here is a 201-residue protein sequence, read N- to C-terminus: Large ribosomal subunit protein uL4 (201 aa).

A disordered region spans residues 39–72; the sequence is KRQGTSAQKSRSEVIGSGKKPWRQKGTGRARAGS.

It belongs to the universal ribosomal protein uL4 family. As to quaternary structure, part of the 50S ribosomal subunit.

Functionally, one of the primary rRNA binding proteins, this protein initially binds near the 5'-end of the 23S rRNA. It is important during the early stages of 50S assembly. It makes multiple contacts with different domains of the 23S rRNA in the assembled 50S subunit and ribosome. Forms part of the polypeptide exit tunnel. This chain is Large ribosomal subunit protein uL4, found in Wigglesworthia glossinidia brevipalpis.